The primary structure comprises 43 residues: KYYGNGVSCNKKGCSVDWGKAIGIIGNNSAANLATGGAAGWSK.

Cys-9 and Cys-14 form a disulfide bridge.

In terms of biological role, this bacteriocin inhibits the growth of several Gram-positive bacteria, especially pathogenic L.monocytogenes and C.botulinum but has no effect on the growth of a number of yeasts and Gram-negative bacteria. In Enterococcus mundtii, this protein is Bacteriocin mundticin.